The chain runs to 295 residues: 4-hydroxy-tetrahydrodipicolinate synthase (295 aa).

Threonine 48 lines the pyruvate pocket. Tyrosine 135 functions as the Proton donor/acceptor in the catalytic mechanism. The active-site Schiff-base intermediate with substrate is the lysine 163. Residue valine 204 participates in pyruvate binding.

The protein belongs to the DapA family. In terms of assembly, homotetramer; dimer of dimers.

The protein resides in the cytoplasm. The catalysed reaction is L-aspartate 4-semialdehyde + pyruvate = (2S,4S)-4-hydroxy-2,3,4,5-tetrahydrodipicolinate + H2O + H(+). The protein operates within amino-acid biosynthesis; L-lysine biosynthesis via DAP pathway; (S)-tetrahydrodipicolinate from L-aspartate: step 3/4. Functionally, catalyzes the condensation of (S)-aspartate-beta-semialdehyde [(S)-ASA] and pyruvate to 4-hydroxy-tetrahydrodipicolinate (HTPA). This is 4-hydroxy-tetrahydrodipicolinate synthase from Francisella philomiragia subsp. philomiragia (strain ATCC 25017 / CCUG 19701 / FSC 153 / O#319-036).